The primary structure comprises 396 residues: S-adenosylmethionine synthase (396 aa).

Residue histidine 16 coordinates ATP. Aspartate 18 provides a ligand contact to Mg(2+). Glutamate 44 contacts K(+). Positions 57 and 100 each coordinate L-methionine. The tract at residues 100-110 (QSPDINQGVDR) is flexible loop. ATP contacts are provided by residues 165 to 167 (DAK), aspartate 240, 246 to 247 (RK), alanine 263, and lysine 267. Aspartate 240 serves as a coordination point for L-methionine. Lysine 271 serves as a coordination point for L-methionine.

The protein belongs to the AdoMet synthase family. Homotetramer; dimer of dimers. It depends on Mg(2+) as a cofactor. The cofactor is K(+).

It is found in the cytoplasm. It carries out the reaction L-methionine + ATP + H2O = S-adenosyl-L-methionine + phosphate + diphosphate. The protein operates within amino-acid biosynthesis; S-adenosyl-L-methionine biosynthesis; S-adenosyl-L-methionine from L-methionine: step 1/1. Functionally, catalyzes the formation of S-adenosylmethionine (AdoMet) from methionine and ATP. The overall synthetic reaction is composed of two sequential steps, AdoMet formation and the subsequent tripolyphosphate hydrolysis which occurs prior to release of AdoMet from the enzyme. The chain is S-adenosylmethionine synthase from Pseudomonas fluorescens (strain SBW25).